A 295-amino-acid chain; its full sequence is Nitrogenase iron protein 1 (295 aa).

Position 12–19 (glycine 12–serine 19) interacts with ATP. Residue cysteine 100 coordinates [4Fe-4S] cluster. The residue at position 103 (arginine 103) is an ADP-ribosylarginine; by dinitrogenase reductase ADP-ribosyltransferase. [4Fe-4S] cluster is bound at residue cysteine 134.

This sequence belongs to the NifH/BchL/ChlL family. As to quaternary structure, homodimer. Requires [4Fe-4S] cluster as cofactor. In terms of processing, the reversible ADP-ribosylation of Arg-103 inactivates the nitrogenase reductase and regulates nitrogenase activity.

It catalyses the reaction N2 + 8 reduced [2Fe-2S]-[ferredoxin] + 16 ATP + 16 H2O = H2 + 8 oxidized [2Fe-2S]-[ferredoxin] + 2 NH4(+) + 16 ADP + 16 phosphate + 6 H(+). Functionally, the key enzymatic reactions in nitrogen fixation are catalyzed by the nitrogenase complex, which has 2 components: the iron protein and the molybdenum-iron protein. This is Nitrogenase iron protein 1 (nifH1) from Mastigocladus laminosus (Fischerella sp.).